Reading from the N-terminus, the 888-residue chain is E3 ubiquitin-protein ligase SH3RF1 (888 aa).

The segment at 12-53 (CPVCLERLDASAKVLPCQHTFCKRCLLGIVGSRNELRCPECR) adopts an RING-type zinc-finger fold. SH3 domains follow at residues 134 to 193 (PQLP…IIKP) and 196 to 259 (QPPP…FNSA). A disordered region spans residues 275-321 (DAGECSSAAAQSSTAPKHSDTKKNTKKRHSFTSLTMANKSSQASQNR). The interval 292 to 362 (HSDTKKNTKK…APSQVHISTT (71 aa)) is interaction with RAC1. Ser304 carries the post-translational modification Phosphoserine. A compositionally biased stretch (polar residues) spans 305–321 (FTSLTMANKSSQASQNR). Positions 440-543 (HLRPQTRPSV…STAGGPAQKL (104 aa)) are interaction with AKT2. Residues 445-506 (TRPSVYVAIY…PGNYVAPVTR (62 aa)) form the SH3 3 domain. Disordered stretches follow at residues 516 to 549 (VPMSTAGQTSRGVTMVSPSTAGGPAQKLQGNGVA), 617 to 637 (SPASVGLPHHSLASPQPAPLM), and 693 to 741 (PDSA…ASPT). Residues 520 to 535 (TAGQTSRGVTMVSPST) show a composition bias toward polar residues. Residue Ser532 is modified to Phosphoserine. Polar residues predominate over residues 693 to 704 (PDSASLACGNSS). Basic and acidic residues predominate over residues 707-718 (KPDKDSKKEKKG). Ser735 carries the post-translational modification Phosphoserine. In terms of domain architecture, SH3 4 spans 829 to 888 (VVCERHRVVVSYPPQSEAELELKEGDIVFVHKKREDGWFKGTLQRNGKTGLFPGSFVENI).

It belongs to the SH3RF family. Interacts with HERP1. Interacts with RAC1; in a GTP-dependent manner. Interacts with MAP3K10/MLK2 and MAP3K11/MLK3. Interacts with MAPK8IP; this interaction leads to the PJAC complex (POSH-JIP or SH3RF1/MAPK8IP apoptotic complex) with a 1:1 ratio. Interacts with SIAH1. Probably part of a signaling complex that may contain SH3RF1, MAPK8IP, DLK1, MAP2K4/MKK4, MAP2K7/MKK7, MAPK8/JNK1, MAPK9/JNK2, AKT1 and AKT2. Found in a complex with RAC2, MAP3K7/TAK1, MAP2K7/MKK7, MAPK8IP1/JIP1, MAPK8/JNK1 and MAPK9/JNK2. Found in a complex with RAC1, MAP3K11/MLK3, MAP2K7/MKK7, MAPK8IP1/JIP1 and MAPK8/JNK1. Interacts with SH3RF2. Post-translationally, phosphorylated at Ser-304 by AKT1 and AKT2. When phosphorylated, it has reduced ability to bind Rac. In terms of processing, autoubiquitinated. Ubiquitinated by SH3RF2, leading to proteasome-mediated degradation.

It localises to the cytoplasm. The protein localises to the perinuclear region. It is found in the cell projection. Its subcellular location is the lamellipodium. The protein resides in the golgi apparatus. It localises to the trans-Golgi network. It catalyses the reaction S-ubiquitinyl-[E2 ubiquitin-conjugating enzyme]-L-cysteine + [acceptor protein]-L-lysine = [E2 ubiquitin-conjugating enzyme]-L-cysteine + N(6)-ubiquitinyl-[acceptor protein]-L-lysine.. It functions in the pathway protein modification; protein ubiquitination. In terms of biological role, has E3 ubiquitin-protein ligase activity. In the absence of an external substrate, it can catalyze self-ubiquitination. Stimulates ubiquitination of potassium channel KCNJ1, enhancing it's dynamin-dependent and clathrin-independent endocytosis. Acts as a scaffold protein that coordinates with MAPK8IP1/JIP1 in organizing different components of the JNK pathway, including RAC1 or RAC2, MAP3K11/MLK3 or MAP3K7/TAK1, MAP2K7/MKK7, MAPK8/JNK1 and/or MAPK9/JNK2 into a functional multiprotein complex to ensure the effective activation of the JNK signaling pathway. Regulates the differentiation of CD4(+) and CD8(+) T-cells and promotes T-helper 1 (Th1) cell differentiation. Regulates the activation of MAPK8/JNK1 and MAPK9/JNK2 in CD4(+) T-cells and the activation of MAPK8/JNK1 in CD8(+) T-cells. Controls proper cortical neuronal migration and the formation of proximal cytoplasmic dilation in the leading process (PCDLP) in migratory neocortical neurons by regulating the proper localization of activated RAC1 and F-actin assembly. In Pongo abelii (Sumatran orangutan), this protein is E3 ubiquitin-protein ligase SH3RF1 (SH3RF1).